Here is a 753-residue protein sequence, read N- to C-terminus: MQRRQSSKHSKRPLQVHHSNQTDLSAWRKGGTVDTEKSAQNRQSLSDQKNDNEQDSLEQALSYFEKIQDRVSLKKSEVLQKHLSTMESIALKRGLPPEGFDVLLDVALSGKLADTVNTRLLKSLIPASAIPESSIVSSVSWFCVSKCSSNIQLLFLRWLITMFDFIDHKEQVHALYGIFFSFLNDEKLCPYICHVLYLLTRKENVKPFRVRRLLDLQSKMGMQPHLQALLSLYKLFCPELVSITLPQKMKTYFKNADGPWKAAINAVRQRNQANSTVPQPLLLGTAQPHSRKRKWNTQLIVPASSANAQNLVVGGKMSRADSYSANESFPVEQLRTFPQLLQNIHRLEFPSQMGSVLTNPLLLHYMNCSKDESVYLRLYYWMGQTLQEECTWCVVDNNQYEEEFRGFLETVYKAECFLQEGFPSCEEFLYRSLPLWDGVSCRSQILQLVSWIPLSTFSEMKSQLCDPLAQLFFTSSLYFKCSVLESLKELLQNWLNWHVVQLDSESDSQFSSLNTTLSGLVNGVAELINFVGRISTAALHLEKSHTFLLYFILDFYETVCDIYLKYKLPLLIMPPAGVFYPALLSMDSVNLNQLCYIMYRYRTNLIAAKENEMSKKKIQQFKFSSQTYQEYNQYIIAMVGCLWTSSAFQKDNHPEGIRLDDELLKKTGVREYKNSFNIVYHPALMCYAVDFLQQAWPDDTTFNFNLIKGKKWNWYLRYLYGQGLEGLKLFIESSINRVSKASQSKAEDEDEKV.

The span at 1 to 15 (MQRRQSSKHSKRPLQ) shows a compositional bias: basic residues. Positions 1–54 (MQRRQSSKHSKRPLQVHHSNQTDLSAWRKGGTVDTEKSAQNRQSLSDQKNDNEQ) are disordered.

It belongs to the CENP-I/CTF3 family. In terms of assembly, component of the CENPA-HI complex, at least composed of CENPH, CENPI, CENPK, CENPL, CENPM, CENPO and CENPP.

The protein resides in the nucleus. It localises to the chromosome. It is found in the centromere. In terms of biological role, component of the CENPA-HI complex, a centromeric complex involved in assembly of kinetochore proteins, mitotic progression and chromosome segregation. Required for the localization of CENPC but not CENPA to the centromere. It however may be involved in incorporation of newly synthesized CENPA into centromeres via its interaction with the CENPA-NAC complex. This is Centromere protein I (CENPI) from Gallus gallus (Chicken).